Here is a 292-residue protein sequence, read N- to C-terminus: Peroxidase 2 (292 aa).

4 disulfide bridges follow: cysteine 7-cysteine 86, cysteine 40-cysteine 45, cysteine 92-cysteine 288, and cysteine 171-cysteine 199. Histidine 38 functions as the Proton acceptor in the catalytic mechanism. Residues aspartate 39, valine 42, glycine 44, aspartate 46, and serine 48 each contribute to the Ca(2+) site. Asparagine 68 carries an N-linked (GlcNAc...) asparagine glycan. Residue proline 134 coordinates substrate. Asparagine 139 is a glycosylation site (N-linked (GlcNAc...) asparagine). Heme b is bound at residue histidine 164. Threonine 165 contacts Ca(2+). N-linked (GlcNAc...) asparagine glycosylation occurs at asparagine 179. Ca(2+)-binding residues include aspartate 210, threonine 213, and aspartate 218.

Belongs to the peroxidase family. Classical plant (class III) peroxidase subfamily. Requires Ca(2+) as cofactor. It depends on heme b as a cofactor.

It catalyses the reaction 2 a phenolic donor + H2O2 = 2 a phenolic radical donor + 2 H2O. In terms of biological role, removal of H(2)O(2), oxidation of toxic reductants, biosynthesis and degradation of lignin, suberization, auxin catabolism, response to environmental stresses such as wounding, pathogen attack and oxidative stress. These functions might be dependent on each isozyme/isoform in each plant tissue. This is Peroxidase 2 from Cucumis sativus (Cucumber).